The chain runs to 552 residues: NADH-ubiquinone oxidoreductase chain 5 (552 aa).

15 helical membrane-spanning segments follow: residues 11-31, 36-56, 68-88, 89-109, 121-141, 152-172, 196-216, 229-249, 256-274, 287-307, 322-342, 365-386, 406-426, 453-473, and 532-552; these read PVTI…PFGL, LAMT…AYAI, FYII…SDNY, LMMF…ISFW, SAIL…GLMI, IALV…LLLL, TPVS…YVLV, LLII…IAIV, VIAL…AIGI, HAFF…SFVA, LPFS…IPGL, ILYY…RVLY, SLGM…IGYS, AYIK…LVYV, and SRAV…LFFI.

The protein belongs to the complex I subunit 5 family.

It localises to the mitochondrion inner membrane. The enzyme catalyses a ubiquinone + NADH + 5 H(+)(in) = a ubiquinol + NAD(+) + 4 H(+)(out). Its function is as follows. Core subunit of the mitochondrial membrane respiratory chain NADH dehydrogenase (Complex I) that is believed to belong to the minimal assembly required for catalysis. Complex I functions in the transfer of electrons from NADH to the respiratory chain. The immediate electron acceptor for the enzyme is believed to be ubiquinone. This Candida albicans (strain SC5314 / ATCC MYA-2876) (Yeast) protein is NADH-ubiquinone oxidoreductase chain 5 (NAD5).